A 70-amino-acid chain; its full sequence is Large ribosomal subunit protein bL31 (70 aa).

Zn(2+) contacts are provided by Cys-16, Cys-18, Cys-37, and Cys-40.

Belongs to the bacterial ribosomal protein bL31 family. Type A subfamily. In terms of assembly, part of the 50S ribosomal subunit. It depends on Zn(2+) as a cofactor.

In terms of biological role, binds the 23S rRNA. The polypeptide is Large ribosomal subunit protein bL31 (Haemophilus influenzae (strain 86-028NP)).